Here is a 304-residue protein sequence, read N- to C-terminus: MTKVRKAIIPAAGLGTRFLPATKALAKEMLPIVDKPTIQFIVEEALKSGIEEILVVTGKAKRSIEDHFDSNFELEYNLQAKGKNELLKLVDETTAINLHFIRQSHPRGLGDAVLQAKAFVGNEPFVVMLGDDLMDITNASAKPLTKQLMEDYDKTHASTIAVMKVPHEDVSSYGVIAPQGKAVKGLYSVDTFVEKPQPEDAPSDLAIIGRYLLTPEIFDILERQTPGAGNEVQLTDAIDTLNKTQRVFAREFKGNRYDVGDKFGFMKTSIDYALEHPQVKEDLKNYIIKLGKALEKSKVPTHSK.

The protein belongs to the UDPGP type 2 family.

It carries out the reaction alpha-D-glucose 1-phosphate + UTP + H(+) = UDP-alpha-D-glucose + diphosphate. The protein operates within carbohydrate metabolism; nucleotide-sugar metabolism. The sequence is that of UTP--glucose-1-phosphate uridylyltransferase 1 (hasC1) from Streptococcus pyogenes serotype M18 (strain MGAS8232).